The sequence spans 460 residues: ATP synthase subunit beta (460 aa).

An ATP-binding site is contributed by 150-157; that stretch reads GGAGVGKT.

This sequence belongs to the ATPase alpha/beta chains family. As to quaternary structure, F-type ATPases have 2 components, CF(1) - the catalytic core - and CF(0) - the membrane proton channel. CF(1) has five subunits: alpha(3), beta(3), gamma(1), delta(1), epsilon(1). CF(0) has three main subunits: a(1), b(2) and c(9-12). The alpha and beta chains form an alternating ring which encloses part of the gamma chain. CF(1) is attached to CF(0) by a central stalk formed by the gamma and epsilon chains, while a peripheral stalk is formed by the delta and b chains.

Its subcellular location is the cell inner membrane. The catalysed reaction is ATP + H2O + 4 H(+)(in) = ADP + phosphate + 5 H(+)(out). In terms of biological role, produces ATP from ADP in the presence of a proton gradient across the membrane. The catalytic sites are hosted primarily by the beta subunits. The sequence is that of ATP synthase subunit beta from Salmonella paratyphi A (strain ATCC 9150 / SARB42).